A 498-amino-acid polypeptide reads, in one-letter code: MVVKKYIVALDQGTTSSRAIVFDHQANIVAVAQREFTQHYPQAGWVEHDPMEIWSSQSSALVEVLTRAGISRHDVAAIGITNQRETTIVWNKHTGKPVCNAIVWQCRRSQAICLDLKAQGVEDLVRQKTGLVLDPYFSASKIKWILDNVEGAREQAEAGDLLFGTVDTWLVWKLTQGEVHVTEPTNASRTMLFNIHTQEWDEELLDLFNIPRAMLPEVKPSCAIYGYTELAGNHIPVAGMAGDQQSALFGQLCIEPGMAKNTYGTGCFLLMNTGDKAVESTHGLLTTIAIGADTKVNYALEGSVFMGGAVIQWLRDELGLITDACDTQYFADKVDDTNGVYLVPAFVGLGAPYWDADARGAIIGLTRGANRNHIIRAALEAIAYQSRDVLDAMSKDSNVPLTQIRVDGGAVANDFLMQFQADITGVTVIRPQVTETTAMGAAFLAGLAVGVWKSTDELKTMLSTEREFTSTMDITTRATLYKGWQKAVSQVSPNGDVG.

ADP is bound at residue Thr-14. 3 residues coordinate ATP: Thr-14, Thr-15, and Ser-16. Thr-14 contacts sn-glycerol 3-phosphate. Arg-18 lines the ADP pocket. Residues Arg-84, Glu-85, Tyr-136, and Asp-243 each contribute to the sn-glycerol 3-phosphate site. Residues Arg-84, Glu-85, Tyr-136, Asp-243, and Gln-244 each coordinate glycerol. Residues Thr-265 and Gly-308 each contribute to the ADP site. ATP is bound by residues Thr-265, Gly-308, Gln-312, and Gly-409. Positions 409 and 413 each coordinate ADP.

This sequence belongs to the FGGY kinase family.

The catalysed reaction is glycerol + ATP = sn-glycerol 3-phosphate + ADP + H(+). It functions in the pathway polyol metabolism; glycerol degradation via glycerol kinase pathway; sn-glycerol 3-phosphate from glycerol: step 1/1. Its activity is regulated as follows. Inhibited by fructose 1,6-bisphosphate (FBP). In terms of biological role, key enzyme in the regulation of glycerol uptake and metabolism. Catalyzes the phosphorylation of glycerol to yield sn-glycerol 3-phosphate. The chain is Glycerol kinase from Shewanella frigidimarina (strain NCIMB 400).